Reading from the N-terminus, the 160-residue chain is Photosystem II extrinsic protein V (160 aa).

An N-terminal signal peptide occupies residues 1–25; the sequence is MKRFFLVAIASVLFFFNTMVGSANA. Residues C62, C65, H66, and H117 each contribute to the heme c site.

It belongs to the cytochrome c family. PsbV subfamily. In terms of assembly, PSII is composed of 1 copy each of membrane proteins PsbA, PsbB, PsbC, PsbD, PsbE, PsbF, PsbH, PsbI, PsbJ, PsbK, PsbL, PsbM, PsbT, PsbX, PsbY, PsbZ, Psb30/Ycf12, peripheral proteins PsbO, CyanoQ (PsbQ), PsbU, PsbV and a large number of cofactors. It forms dimeric complexes. The cyanobacterial oxygen-evolving complex is composed of PsbO, CyanoQ (PsbQ), PsbV and PsbU. Heme c serves as cofactor.

Its subcellular location is the cellular thylakoid membrane. Functionally, one of the extrinsic, lumenal subunits of photosystem II (PSII). PSII is a light-driven water plastoquinone oxidoreductase, using light energy to abstract electrons from H(2)O, generating a proton gradient subsequently used for ATP formation. The extrinsic proteins stabilize the structure of photosystem II oxygen-evolving complex (OEC), the ion environment of oxygen evolution and protect the OEC against heat-induced inactivation. Low-potential cytochrome c that plays a role in the OEC of PSII, required for normal function or stabilization of PSII. This is Photosystem II extrinsic protein V from Synechocystis sp. (strain ATCC 27184 / PCC 6803 / Kazusa).